The primary structure comprises 162 residues: NADH-quinone oxidoreductase subunit I (162 aa).

4Fe-4S ferredoxin-type domains follow at residues 52 to 82 (LRRY…IEAG) and 93 to 122 (TRYD…EGPN). Residues Cys62, Cys65, Cys68, Cys72, Cys102, Cys105, Cys108, and Cys112 each coordinate [4Fe-4S] cluster.

It belongs to the complex I 23 kDa subunit family. As to quaternary structure, NDH-1 is composed of 14 different subunits. Subunits NuoA, H, J, K, L, M, N constitute the membrane sector of the complex. [4Fe-4S] cluster is required as a cofactor.

The protein resides in the cell inner membrane. It catalyses the reaction a quinone + NADH + 5 H(+)(in) = a quinol + NAD(+) + 4 H(+)(out). Its function is as follows. NDH-1 shuttles electrons from NADH, via FMN and iron-sulfur (Fe-S) centers, to quinones in the respiratory chain. The immediate electron acceptor for the enzyme in this species is believed to be ubiquinone. Couples the redox reaction to proton translocation (for every two electrons transferred, four hydrogen ions are translocated across the cytoplasmic membrane), and thus conserves the redox energy in a proton gradient. This Azorhizobium caulinodans (strain ATCC 43989 / DSM 5975 / JCM 20966 / LMG 6465 / NBRC 14845 / NCIMB 13405 / ORS 571) protein is NADH-quinone oxidoreductase subunit I.